Consider the following 427-residue polypeptide: Peptidase B (427 aa).

2 residues coordinate Mn(2+): K195 and D200. The active site involves K207. 3 residues coordinate Mn(2+): D218, D277, and E279. R281 is a catalytic residue.

It belongs to the peptidase M17 family. Homohexamer. Mn(2+) serves as cofactor.

It is found in the cytoplasm. The enzyme catalyses Release of an N-terminal amino acid, Xaa, from a peptide or arylamide. Xaa is preferably Glu or Asp but may be other amino acids, including Leu, Met, His, Cys and Gln.. Its function is as follows. Probably plays an important role in intracellular peptide degradation. In Salmonella dublin (strain CT_02021853), this protein is Peptidase B.